The sequence spans 360 residues: Fructose-bisphosphate aldolase 1 (360 aa).

Ser63 contacts D-glyceraldehyde 3-phosphate. Asp110 serves as the catalytic Proton donor. His111, Asp145, Glu175, and His227 together coordinate Zn(2+). Residue Gly228 participates in dihydroxyacetone phosphate binding. His266 is a binding site for Zn(2+). 267–269 (GGS) is a dihydroxyacetone phosphate binding site.

It belongs to the class II fructose-bisphosphate aldolase family. Homodimer. Zn(2+) is required as a cofactor.

It catalyses the reaction beta-D-fructose 1,6-bisphosphate = D-glyceraldehyde 3-phosphate + dihydroxyacetone phosphate. It functions in the pathway carbohydrate degradation; glycolysis; D-glyceraldehyde 3-phosphate and glycerone phosphate from D-glucose: step 4/4. Its function is as follows. Catalyzes the aldol condensation of dihydroxyacetone phosphate (DHAP or glycerone-phosphate) with glyceraldehyde 3-phosphate (G3P) to form fructose 1,6-bisphosphate (FBP) in gluconeogenesis and the reverse reaction in glycolysis. The polypeptide is Fructose-bisphosphate aldolase 1 (FBA1) (Paracoccidioides lutzii (strain ATCC MYA-826 / Pb01) (Paracoccidioides brasiliensis)).